A 398-amino-acid polypeptide reads, in one-letter code: Elongation factor Tu (398 aa).

The 198-residue stretch at 10–207 (KPHVNIGTIG…TVDSYIPEPE (198 aa)) folds into the tr-type G domain. Residues 19-26 (GHVDHGKT) form a G1 region. 19-26 (GHVDHGKT) contributes to the GTP binding site. A Mg(2+)-binding site is contributed by Thr26. The G2 stretch occupies residues 63 to 67 (GITIN). A G3 region spans residues 84 to 87 (DAPG). GTP is bound by residues 84–88 (DAPGH) and 139–142 (NKVD). Residues 139-142 (NKVD) form a G4 region. The segment at 177-179 (SAL) is G5.

This sequence belongs to the TRAFAC class translation factor GTPase superfamily. Classic translation factor GTPase family. EF-Tu/EF-1A subfamily. As to quaternary structure, monomer.

It localises to the cytoplasm. The catalysed reaction is GTP + H2O = GDP + phosphate + H(+). In terms of biological role, GTP hydrolase that promotes the GTP-dependent binding of aminoacyl-tRNA to the A-site of ribosomes during protein biosynthesis. This Streptococcus equi subsp. zooepidemicus (strain MGCS10565) protein is Elongation factor Tu.